Consider the following 199-residue polypeptide: Proteasome subunit beta type-2 (199 aa).

The protein belongs to the peptidase T1B family. The 26S proteasome consists of a 20S proteasome core and two 19S regulatory subunits. The 20S proteasome core is composed of 28 subunits that are arranged in four stacked rings, resulting in a barrel-shaped structure. The two end rings are each formed by seven alpha subunits, and the two central rings are each formed by seven beta subunits. The catalytic chamber with the active sites is on the inside of the barrel.

The protein localises to the cytoplasm. Its subcellular location is the nucleus. Functionally, non-catalytic component of the proteasome, a multicatalytic proteinase complex which is characterized by its ability to cleave peptides with Arg, Phe, Tyr, Leu, and Glu adjacent to the leaving group at neutral or slightly basic pH. The proteasome has an ATP-dependent proteolytic activity. In Caenorhabditis elegans, this protein is Proteasome subunit beta type-2 (pbs-4).